A 124-amino-acid chain; its full sequence is MKILPPTLRVPRRYIAFEVISERELSREELVSLIWDSCLKLHGECETSNFRLWLMKLWRFDFPDAVRVRGILQCQRGYERRVMMALTCAHHHSGVRVAIHILGLSGTIRSATQKFIKPSKKDKY.

Belongs to the eukaryotic/archaeal RNase P protein component 2 family. As to quaternary structure, consists of a catalytic RNA component and at least 4-5 protein subunits.

It localises to the cytoplasm. It carries out the reaction Endonucleolytic cleavage of RNA, removing 5'-extranucleotides from tRNA precursor.. Functionally, part of ribonuclease P, a protein complex that generates mature tRNA molecules by cleaving their 5'-ends. The protein is Ribonuclease P protein component 2 of Methanothermobacter thermautotrophicus (strain ATCC 29096 / DSM 1053 / JCM 10044 / NBRC 100330 / Delta H) (Methanobacterium thermoautotrophicum).